Here is a 484-residue protein sequence, read N- to C-terminus: Glutamyl-tRNA(Gln) amidotransferase subunit A (484 aa).

Residues Lys76 and Ser151 each act as charge relay system in the active site. Catalysis depends on Ser175, which acts as the Acyl-ester intermediate.

Belongs to the amidase family. GatA subfamily. Heterotrimer of A, B and C subunits.

The catalysed reaction is L-glutamyl-tRNA(Gln) + L-glutamine + ATP + H2O = L-glutaminyl-tRNA(Gln) + L-glutamate + ADP + phosphate + H(+). In terms of biological role, allows the formation of correctly charged Gln-tRNA(Gln) through the transamidation of misacylated Glu-tRNA(Gln) in organisms which lack glutaminyl-tRNA synthetase. The reaction takes place in the presence of glutamine and ATP through an activated gamma-phospho-Glu-tRNA(Gln). The sequence is that of Glutamyl-tRNA(Gln) amidotransferase subunit A from Cellvibrio japonicus (strain Ueda107) (Pseudomonas fluorescens subsp. cellulosa).